Here is a 329-residue protein sequence, read N- to C-terminus: Sex comb on midleg-like protein 1 (329 aa).

2 positions are modified to phosphoserine: serine 138 and serine 238. In terms of domain architecture, SAM spans 258–325 (WSVEAVVLFL…YYIDRLKQGK (68 aa)).

Belongs to the SCM family.

Its subcellular location is the nucleus. In terms of biological role, putative Polycomb group (PcG) protein. PcG proteins act by forming multiprotein complexes, which are required to maintain the transcriptionally repressive state of homeotic genes throughout development. May be involved in spermatogenesis during sexual maturation. This is Sex comb on midleg-like protein 1 (SCML1) from Nomascus leucogenys (Northern white-cheeked gibbon).